Here is a 161-residue protein sequence, read N- to C-terminus: Phosphopantetheine adenylyltransferase (161 aa).

Position 9 (Ser9) interacts with substrate. ATP contacts are provided by residues 9-10 (SF) and His17. Residues Lys41, Leu73, and Lys87 each coordinate substrate. ATP contacts are provided by residues 88 to 90 (GLR), Glu98, and 122 to 128 (YSFVSSS).

This sequence belongs to the bacterial CoaD family. As to quaternary structure, homohexamer. Requires Mg(2+) as cofactor.

The protein resides in the cytoplasm. It carries out the reaction (R)-4'-phosphopantetheine + ATP + H(+) = 3'-dephospho-CoA + diphosphate. It participates in cofactor biosynthesis; coenzyme A biosynthesis; CoA from (R)-pantothenate: step 4/5. Reversibly transfers an adenylyl group from ATP to 4'-phosphopantetheine, yielding dephospho-CoA (dPCoA) and pyrophosphate. The polypeptide is Phosphopantetheine adenylyltransferase (Mycobacteroides abscessus (strain ATCC 19977 / DSM 44196 / CCUG 20993 / CIP 104536 / JCM 13569 / NCTC 13031 / TMC 1543 / L948) (Mycobacterium abscessus)).